Reading from the N-terminus, the 839-residue chain is Protein translocase subunit SecA (839 aa).

Residues Q85, 103–107 (GEGKT), and D493 contribute to the ATP site. The span at 780–790 (QIHEQERERAS) shows a compositional bias: basic and acidic residues. The tract at residues 780-839 (QIHEQERERASQRATTAAPQNIQSQQSANTDDLPKVERNEACPCGSGKKFKNCHGRKSFS) is disordered. The segment covering 791 to 809 (QRATTAAPQNIQSQQSANT) has biased composition (polar residues). Residues C821, C823, C832, and H833 each contribute to the Zn(2+) site. Residues 827 to 839 (KKFKNCHGRKSFS) show a composition bias toward basic residues.

This sequence belongs to the SecA family. As to quaternary structure, monomer and homodimer. Part of the essential Sec protein translocation apparatus which comprises SecA, SecYEG and auxiliary proteins SecDF. Other proteins may also be involved. The cofactor is Zn(2+).

The protein localises to the cell membrane. It localises to the cytoplasm. The catalysed reaction is ATP + H2O + cellular proteinSide 1 = ADP + phosphate + cellular proteinSide 2.. Its function is as follows. Part of the Sec protein translocase complex. Interacts with the SecYEG preprotein conducting channel. Has a central role in coupling the hydrolysis of ATP to the transfer of proteins into and across the cell membrane, serving as an ATP-driven molecular motor driving the stepwise translocation of polypeptide chains across the membrane. This is Protein translocase subunit SecA from Streptococcus pyogenes serotype M3 (strain ATCC BAA-595 / MGAS315).